The sequence spans 298 residues: N-acetylmuramic acid 6-phosphate etherase (298 aa).

Residues 55–218 enclose the SIS domain; sequence IHTQVSGGGR…STGLMIKSGK (164 aa). Glu-83 functions as the Proton donor in the catalytic mechanism. Glu-114 is an active-site residue.

This sequence belongs to the GCKR-like family. MurNAc-6-P etherase subfamily. Homodimer.

It carries out the reaction N-acetyl-D-muramate 6-phosphate + H2O = N-acetyl-D-glucosamine 6-phosphate + (R)-lactate. It functions in the pathway amino-sugar metabolism; 1,6-anhydro-N-acetylmuramate degradation. It participates in amino-sugar metabolism; N-acetylmuramate degradation. The protein operates within cell wall biogenesis; peptidoglycan recycling. In terms of biological role, specifically catalyzes the cleavage of the D-lactyl ether substituent of MurNAc 6-phosphate, producing GlcNAc 6-phosphate and D-lactate. Together with AnmK, is also required for the utilization of anhydro-N-acetylmuramic acid (anhMurNAc) either imported from the medium or derived from its own cell wall murein, and thus plays a role in cell wall recycling. This Escherichia coli O1:K1 / APEC protein is N-acetylmuramic acid 6-phosphate etherase.